The following is a 104-amino-acid chain: Secreted RxLR effector protein 54 (104 aa).

A signal peptide spans 1–19; the sequence is MIFTLLGLALVATKSACIA. A RxLR motif is present at residues 52 to 55; the sequence is RSLR. A glycan (N-linked (GlcNAc...) asparagine) is linked at asparagine 64.

Belongs to the RxLR effector family.

It localises to the secreted. The protein resides in the host chloroplast envelope. Its subcellular location is the host mitochondrion. It is found in the host nucleus. The protein localises to the host cytoplasm. Its function is as follows. Secreted effector that completely suppresses the host cell death induced by cell death-inducing proteins. The polypeptide is Secreted RxLR effector protein 54 (Plasmopara viticola (Downy mildew of grapevine)).